The following is a 188-amino-acid chain: MKIAVIYFGGQYNHLIVKDLKYLGLNAVLITPEKPVEILKDYDCIIFGGGPYSVITELNKMGNAVDYVLRTSQPKLGICLGHQLLAKVLGGEVTKATKPEYGLVKVNINDEDTILRGLSPSINAWESHTDEVISPPQGFRILANSENAKVQAMVNKDNTIFGVQFHPEVKHTEKGIEVFKNFIEACKK.

The Glutamine amidotransferase type-1 domain occupies 2–188; the sequence is KIAVIYFGGQ…FKNFIEACKK (187 aa). The Nucleophile role is filled by Cys79. Catalysis depends on residues His166 and Glu168.

As to quaternary structure, heterodimer composed of a glutamine amidotransferase subunit (A) and a GMP-binding subunit (B).

The enzyme catalyses XMP + L-glutamine + ATP + H2O = GMP + L-glutamate + AMP + diphosphate + 2 H(+). The protein operates within purine metabolism; GMP biosynthesis; GMP from XMP (L-Gln route): step 1/1. Its function is as follows. Catalyzes the synthesis of GMP from XMP. This is GMP synthase [glutamine-hydrolyzing] subunit A from Sulfurisphaera tokodaii (strain DSM 16993 / JCM 10545 / NBRC 100140 / 7) (Sulfolobus tokodaii).